Here is a 474-residue protein sequence, read N- to C-terminus: tRNA-2-methylthio-N(6)-dimethylallyladenosine synthase (474 aa).

The region spanning 3 to 120 (QKLHIKTWGC…LPEMINQIRG (118 aa)) is the MTTase N-terminal domain. Cys-12, Cys-49, Cys-83, Cys-157, Cys-161, and Cys-164 together coordinate [4Fe-4S] cluster. The region spanning 143 to 375 (RAEGPTAFVS…QERINQQAAQ (233 aa)) is the Radical SAM core domain. One can recognise a TRAM domain in the interval 378 to 441 (RRMLGTEQRV…TNSLRGEVVR (64 aa)).

It belongs to the methylthiotransferase family. MiaB subfamily. As to quaternary structure, monomer. The cofactor is [4Fe-4S] cluster.

Its subcellular location is the cytoplasm. It carries out the reaction N(6)-dimethylallyladenosine(37) in tRNA + (sulfur carrier)-SH + AH2 + 2 S-adenosyl-L-methionine = 2-methylsulfanyl-N(6)-dimethylallyladenosine(37) in tRNA + (sulfur carrier)-H + 5'-deoxyadenosine + L-methionine + A + S-adenosyl-L-homocysteine + 2 H(+). In terms of biological role, catalyzes the methylthiolation of N6-(dimethylallyl)adenosine (i(6)A), leading to the formation of 2-methylthio-N6-(dimethylallyl)adenosine (ms(2)i(6)A) at position 37 in tRNAs that read codons beginning with uridine. In Haemophilus influenzae (strain PittEE), this protein is tRNA-2-methylthio-N(6)-dimethylallyladenosine synthase.